Reading from the N-terminus, the 236-residue chain is tRNA1(Val) (adenine(37)-N6)-methyltransferase (236 aa).

The protein belongs to the methyltransferase superfamily. tRNA (adenine-N(6)-)-methyltransferase family.

It localises to the cytoplasm. The catalysed reaction is adenosine(37) in tRNA1(Val) + S-adenosyl-L-methionine = N(6)-methyladenosine(37) in tRNA1(Val) + S-adenosyl-L-homocysteine + H(+). In terms of biological role, specifically methylates the adenine in position 37 of tRNA(1)(Val) (anticodon cmo5UAC). The chain is tRNA1(Val) (adenine(37)-N6)-methyltransferase from Actinobacillus succinogenes (strain ATCC 55618 / DSM 22257 / CCUG 43843 / 130Z).